A 200-amino-acid chain; its full sequence is MVKYIKLDERAEVKSSFDRFKQFLHRTFRGELFIGLWVVLREMLKKNNSHTILYPMEKFELSDRYRGIHKLLRLLESGNERCIGCGLCEKICVSNCIRMETTLGDDGRKKVLNYSINFGRCVYCGLCADVCPELAIVHGGDYEFASEQRAFFGFKKDLLTKYDELKNQKEFTGFGSLPENVDDLIKLTPTVYTKKVDENV.

2 4Fe-4S ferredoxin-type domains span residues 73-102 (RLLESGNERCIGCGLCEKICVSNCIRMETT) and 112-141 (LNYSINFGRCVYCGLCADVCPELAIVHGGD). [4Fe-4S] cluster is bound by residues cysteine 82, cysteine 85, cysteine 88, cysteine 92, cysteine 121, cysteine 124, cysteine 127, and cysteine 131.

The protein belongs to the complex I 23 kDa subunit family. In terms of assembly, NDH-1 is composed of 14 different subunits. Subunits NuoA, H, J, K, L, M, N constitute the membrane sector of the complex. [4Fe-4S] cluster serves as cofactor.

The protein localises to the cell inner membrane. The catalysed reaction is a quinone + NADH + 5 H(+)(in) = a quinol + NAD(+) + 4 H(+)(out). Functionally, NDH-1 shuttles electrons from NADH, via FMN and iron-sulfur (Fe-S) centers, to quinones in the respiratory chain. The immediate electron acceptor for the enzyme in this species is believed to be ubiquinone. Couples the redox reaction to proton translocation (for every two electrons transferred, four hydrogen ions are translocated across the cytoplasmic membrane), and thus conserves the redox energy in a proton gradient. This chain is NADH-quinone oxidoreductase subunit I, found in Campylobacter hominis (strain ATCC BAA-381 / DSM 21671 / CCUG 45161 / LMG 19568 / NCTC 13146 / CH001A).